The sequence spans 445 residues: 2-oxoisovalerate dehydrogenase subunit alpha, mitochondrial (445 aa).

A mitochondrion-targeting transit peptide spans 1–45; the sequence is MAVAIAAARVWRLNRGLSQAALLLLRQPGARGLARSHPPRQQQQF. The disordered stretch occupies residues 33-52; that stretch reads LARSHPPRQQQQFSSLDDKP. Positions 158 and 159 each coordinate thiamine diphosphate. Ser206 lines the K(+) pocket. A thiamine diphosphate-binding site is contributed by Ser207. Pro208, Thr211, and Gln212 together coordinate K(+). Position 238 (Glu238) interacts with Mg(2+). The thiamine diphosphate site is built by Gly239, Ala240, and Arg265. Residues Asn267 and Tyr269 each coordinate Mg(2+). His336 contributes to the thiamine diphosphate binding site. Residue Ser337 is modified to Phosphoserine; by BCKDK. Thr338 is modified (phosphothreonine). A phosphoserine mark is found at Ser339 and Ser347. Residue Lys356 is modified to N6-acetyllysine; alternate. Position 356 is an N6-succinyllysine; alternate (Lys356). Lys380 bears the N6-succinyllysine mark.

The protein belongs to the BCKDHA family. In terms of assembly, heterotetramer of 2 alpha/BCKDHA and 2 beta chains/BCKDHB that forms the branched-chain alpha-keto acid decarboxylase (E1) component of the BCKD complex. The branched-chain alpha-ketoacid dehydrogenase is a large complex composed of three major building blocks E1, E2 and E3. It is organized around E2, a 24-meric cubic core composed of DBT, to which are associated 6 to 12 copies of E1, and approximately 6 copies of the dehydrogenase E3, a DLD dimer. Interacts with PPM1K. Thiamine diphosphate is required as a cofactor. Requires Mg(2+) as cofactor. In terms of processing, phosphorylated at Ser-337 by BCKDK and dephosphorylated by protein phosphatase PPM1K.

It is found in the mitochondrion matrix. The catalysed reaction is N(6)-[(R)-lipoyl]-L-lysyl-[protein] + 3-methyl-2-oxobutanoate + H(+) = N(6)-[(R)-S(8)-2-methylpropanoyldihydrolipoyl]-L-lysyl-[protein] + CO2. Its function is as follows. Together with BCKDHB forms the heterotetrameric E1 subunit of the mitochondrial branched-chain alpha-ketoacid dehydrogenase (BCKD) complex. The BCKD complex catalyzes the multi-step oxidative decarboxylation of alpha-ketoacids derived from the branched-chain amino-acids valine, leucine and isoleucine producing CO2 and acyl-CoA which is subsequently utilized to produce energy. The E1 subunit catalyzes the first step with the decarboxylation of the alpha-ketoacid forming an enzyme-product intermediate. A reductive acylation mediated by the lipoylamide cofactor of E2 extracts the acyl group from the E1 active site for the next step of the reaction. The polypeptide is 2-oxoisovalerate dehydrogenase subunit alpha, mitochondrial (Homo sapiens (Human)).